The primary structure comprises 102 residues: Phosphoribosyl-ATP pyrophosphatase (102 aa).

The protein belongs to the PRA-PH family.

It is found in the cytoplasm. It carries out the reaction 1-(5-phospho-beta-D-ribosyl)-ATP + H2O = 1-(5-phospho-beta-D-ribosyl)-5'-AMP + diphosphate + H(+). The protein operates within amino-acid biosynthesis; L-histidine biosynthesis; L-histidine from 5-phospho-alpha-D-ribose 1-diphosphate: step 2/9. The sequence is that of Phosphoribosyl-ATP pyrophosphatase from Jannaschia sp. (strain CCS1).